A 563-amino-acid chain; its full sequence is Sperm-tail PG-rich repeat-containing protein 2 (563 aa).

3 STPGR repeats span residues 21 to 34, 63 to 73, and 97 to 107; these read VGPG…PKQQ, PGPAHYNVSQA, and GPGPASYDCPY. The disordered stretch occupies residues 131-163; the sequence is IPSIPSSGKSHGYHLNEDDTIMRRTPPSSDKTM. 7 STPGR repeats span residues 200 to 219, 250 to 263, 292 to 321, 334 to 353, 423 to 438, 473 to 483, and 507 to 518; these read GPGP…YENI, PGPG…QFDH, TPAP…FGQR, LPGP…QVKK, LPAP…YDMS, GPGPATYNPIL, and SPGPTTYELSPF.

The sequence is that of Sperm-tail PG-rich repeat-containing protein 2 (Stpg2) from Rattus norvegicus (Rat).